Consider the following 448-residue polypeptide: FAD-linked oxidoreductase nodO (448 aa).

The FAD-binding PCMH-type domain occupies 35 to 206 (PEHFPLAIVK…IRFFLKTCPL (172 aa)).

It belongs to the oxygen-dependent FAD-linked oxidoreductase family. The cofactor is FAD.

It functions in the pathway secondary metabolite biosynthesis. Its function is as follows. FAD-linked oxidoreductase; part of the gene cluster that mediates the biosynthesis of the indole diterpenes nodulisporic acids (NA). Nodulisporic acid A (NAA) and its chemically modified derivatives are of particular significance because of their highly potent insecticidal activity against blood-feeding arthropods and lack of observable adverse effects on mammals, in particular the tremogenicity associated with the paspaline-derived IDTs is not observed. The geranylgeranyl diphosphate (GGPP) synthase ggs1, localized outside of the cluster, is proposed to catalyze the first step in nodulisporic acid biosynthesis via conversion of farnesyl pyrophosphate and isopentyl pyrophosphate into geranylgeranyl pyrophosphate (GGPP). Condensation of indole-3-glycerol phosphate with GGPP by the prenyl transferase nodC then forms 3-geranylgeranylindole (3-GGI). Epoxidation by the FAD-dependent monooxygenase nodM leads to a single-epoxidized-GGI that is substrate of the terpene cyclase nodB for cyclization to yield emindole SB. The terminal methyl carbon, C28, of emindole SB is then oxidized by the cytochrome P450 monooxygenase nodW to produce nodulisporic acid F (NAF), the pentacyclic core of NAA. NAF is converted to nodulisporic acid E (NAE) via prenylation. This step is probably performed by one of the indole diterpene prenyltransferases nodD1 or nodD2. Several oxidation steps performed by the FAD-linked oxidoreductase nodO and one of the cytochrome P450 monooxygenase nodR, nodX or nodZ further convert NAE to nodulisporic acid D (NAD). NAD is substrate of cytochrome P450 monooxygenase nodJ to produce the precursor of nodulisporic acid C (NAC), converted to NAC by one of the indole diterpene prenyltransferases nodD1 or nodD2. The FAD-dependent monooxygenase nodY2 then oxidizes NAC to nodulisporic acid B (NAB). Finally NAB is converted to NAA by one of the cytochrome P450 monooxygenases nodR, nodX or nodZ. The sequence is that of FAD-linked oxidoreductase nodO from Hypoxylon pulicicidum.